The primary structure comprises 63 residues: uncharacterized protein (63 aa).

The helical transmembrane segment at 37 to 57 threads the bilayer; the sequence is IFFPTTFDVLLLAILIFLACA.

The protein localises to the cell membrane. This is an uncharacterized protein from Bacillus subtilis (strain 168).